Consider the following 170-residue polypeptide: Putative zinc finger protein 542 (170 aa).

The KRAB domain occupies 1–42 (MLENYQNLVWLGLSISKSVISLLEKRKLPWIMAKEEIRGPLP). C2H2-type zinc fingers lie at residues 98–120 (NVCK…KRNH) and 126–148 (NQCL…QRIH). A C2H2-type 3; degenerate zinc finger spans residues 154 to 170 (YKCNECIKTFNQRAHLT).

The protein belongs to the krueppel C2H2-type zinc-finger protein family.

The protein resides in the nucleus. May be involved in transcriptional regulation. This chain is Putative zinc finger protein 542 (ZNF542P), found in Homo sapiens (Human).